Here is a 345-residue protein sequence, read N- to C-terminus: Nicotinate-nucleotide--dimethylbenzimidazole phosphoribosyltransferase (345 aa).

Catalysis depends on E312, which acts as the Proton acceptor.

This sequence belongs to the CobT family.

It catalyses the reaction 5,6-dimethylbenzimidazole + nicotinate beta-D-ribonucleotide = alpha-ribazole 5'-phosphate + nicotinate + H(+). It functions in the pathway nucleoside biosynthesis; alpha-ribazole biosynthesis; alpha-ribazole from 5,6-dimethylbenzimidazole: step 1/2. Catalyzes the synthesis of alpha-ribazole-5'-phosphate from nicotinate mononucleotide (NAMN) and 5,6-dimethylbenzimidazole (DMB). The polypeptide is Nicotinate-nucleotide--dimethylbenzimidazole phosphoribosyltransferase (Bacteroides fragilis (strain ATCC 25285 / DSM 2151 / CCUG 4856 / JCM 11019 / LMG 10263 / NCTC 9343 / Onslow / VPI 2553 / EN-2)).